Consider the following 281-residue polypeptide: LIM domain-containing protein G (281 aa).

LIM zinc-binding domains lie at 40-101 (LNCS…IKFN), 141-205 (DICT…SKQV), and 206-262 (NCFA…FTQP).

The sequence is that of LIM domain-containing protein G (limG) from Dictyostelium discoideum (Social amoeba).